A 501-amino-acid chain; its full sequence is NAD(P)H-quinone oxidoreductase chain 4, chloroplastic (501 aa).

The next 14 membrane-spanning stretches (helical) occupy residues 5-25, 38-58, 85-105, 112-130, 135-155, 168-188, 209-229, 243-263, 275-295, 306-326, 331-351, 387-407, 417-437, and 463-483; these read FPWL…IFFL, ICIC…HFQL, GLSI…TLAA, SRLF…IGSF, LLLF…LLAM, FILY…GIGL, ALEI…LPII, HYST…YGLV, SIFS…AALT, IAYS…SITD, GAIL…FLAG, LALP…GIIT, ILIT…LLSM, and LFVS…PDFV.

The protein belongs to the complex I subunit 4 family.

It localises to the plastid. The protein localises to the chloroplast thylakoid membrane. It carries out the reaction a plastoquinone + NADH + (n+1) H(+)(in) = a plastoquinol + NAD(+) + n H(+)(out). The enzyme catalyses a plastoquinone + NADPH + (n+1) H(+)(in) = a plastoquinol + NADP(+) + n H(+)(out). The sequence is that of NAD(P)H-quinone oxidoreductase chain 4, chloroplastic from Eucalyptus globulus subsp. globulus (Tasmanian blue gum).